The sequence spans 434 residues: Ribosomal RNA-processing protein 14 (434 aa).

The residue at position 2 (serine 2) is an N-acetylserine. Basic and acidic residues-rich tracts occupy residues 32-58, 70-79, and 95-105; these read KSQEQWKAKKKTKEQSKNDKLKKLDPE, VMKKKEKDAK, and KQKEATSKVEG. The interval 32–257 is disordered; sequence KSQEQWKAKK…RFKKGKKDSE (226 aa). Acidic residues predominate over residues 121 to 140; sequence PDEDEEEEEDIKVIFDDEGN. Basic and acidic residues predominate over residues 144-178; the sequence is LESKKDTTEPDRSVEKKSITEEEKLQRKKNLEALR. Coiled-coil stretches lie at residues 162–230 and 293–360; these read ITEE…EIAS and AKND…QKRK. The span at 220 to 241 shows a compositional bias: acidic residues; the sequence is EQEQDQDEIASDSDMEDIDSDL. Over residues 375-392 the composition is skewed to basic and acidic residues; it reads TISERQKRREENLRIRKD. The segment at 375–434 is disordered; sequence TISERQKRREENLRIRKDNKGKKRNKQEKMKRKYVGSAVPKKRAGFEGRLKTGKKKGGPK. Composition is skewed to basic residues over residues 393-408 and 425-434; these read NKGKKRNKQEKMKRKY and KTGKKKGGPK.

This sequence belongs to the SURF6 family. In terms of assembly, component of the 90S and 60S pre-ribosomal particles.

The protein resides in the nucleus. Its subcellular location is the nucleolus. In terms of biological role, involved in ribosome biogenesis and cell polarity. Required for the synthesis of both 40S and 60S ribosomal subunits and may also play some direct role in correct positioning of the mitotic spindle during mitosis. The chain is Ribosomal RNA-processing protein 14 (RRP14) from Saccharomyces cerevisiae (strain ATCC 204508 / S288c) (Baker's yeast).